We begin with the raw amino-acid sequence, 202 residues long: Pyridoxal 5'-phosphate synthase subunit PdxT (202 aa).

An L-glutamine-binding site is contributed by 48 to 50 (GES). Cysteine 80 (nucleophile) is an active-site residue. L-glutamine-binding positions include arginine 112 and 139 to 140 (IR). Residues histidine 180 and glutamate 182 each act as charge relay system in the active site.

This sequence belongs to the glutaminase PdxT/SNO family. In the presence of PdxS, forms a dodecamer of heterodimers. Only shows activity in the heterodimer.

It carries out the reaction aldehydo-D-ribose 5-phosphate + D-glyceraldehyde 3-phosphate + L-glutamine = pyridoxal 5'-phosphate + L-glutamate + phosphate + 3 H2O + H(+). It catalyses the reaction L-glutamine + H2O = L-glutamate + NH4(+). Its pathway is cofactor biosynthesis; pyridoxal 5'-phosphate biosynthesis. Its function is as follows. Catalyzes the hydrolysis of glutamine to glutamate and ammonia as part of the biosynthesis of pyridoxal 5'-phosphate. The resulting ammonia molecule is channeled to the active site of PdxS. This Hyperthermus butylicus (strain DSM 5456 / JCM 9403 / PLM1-5) protein is Pyridoxal 5'-phosphate synthase subunit PdxT.